Reading from the N-terminus, the 264-residue chain is Thiazole synthase (264 aa).

The active-site Schiff-base intermediate with DXP is Lys101. Residues Gly162, Ala189–Gly190, and Asn211–Thr212 each bind 1-deoxy-D-xylulose 5-phosphate. The disordered stretch occupies residues Lys245–Gln264.

The protein belongs to the ThiG family. In terms of assembly, homotetramer. Forms heterodimers with either ThiH or ThiS.

It localises to the cytoplasm. It carries out the reaction [ThiS sulfur-carrier protein]-C-terminal-Gly-aminoethanethioate + 2-iminoacetate + 1-deoxy-D-xylulose 5-phosphate = [ThiS sulfur-carrier protein]-C-terminal Gly-Gly + 2-[(2R,5Z)-2-carboxy-4-methylthiazol-5(2H)-ylidene]ethyl phosphate + 2 H2O + H(+). Its pathway is cofactor biosynthesis; thiamine diphosphate biosynthesis. Functionally, catalyzes the rearrangement of 1-deoxy-D-xylulose 5-phosphate (DXP) to produce the thiazole phosphate moiety of thiamine. Sulfur is provided by the thiocarboxylate moiety of the carrier protein ThiS. In vitro, sulfur can be provided by H(2)S. This Cellvibrio japonicus (strain Ueda107) (Pseudomonas fluorescens subsp. cellulosa) protein is Thiazole synthase.